Reading from the N-terminus, the 2549-residue chain is Serine/threonine-protein kinase mTOR (2549 aa).

The residue at position 1 (Met1) is an N-acetylmethionine. The tract at residues Met1–Val651 is interaction with NBN. 32 HEAT repeats span residues Ser16–Arg53, Met55–Gly99, Asn100–Gly137, Asp138–Val179, Pro180–Thr220, Gln222–Ser276, Met277–Ile313, Thr314–Asp364, Leu365–Asp409, Thr410–Arg445, Ser446–Gly494, Pro495–Pro529, Gln530–His563, Gln564–Gly596, His597–Leu636, Ile637–Phe683, His686–Ala724, Met727–Arg766, Arg769–Leu811, Arg814–Tyr853, Pro857–Ala893, Leu894–Pro942, Leu943–Gln988, Phe989–Ile1027, Pro1029–Lys1068, Leu1069–Ala1105, Asn1106–Glu1144, Ser1145–Tyr1188, Gln1189–Glu1225, Glu1226–Arg1273, Arg1274–Asn1311, and Pro1312–Leu1345. Ser567 is subject to Phosphoserine. At Thr1162 the chain carries Phosphothreonine. Lys1218 bears the N6-acetyllysine mark. Ser1261 bears the Phosphoserine mark. 16 TPR repeats span residues Thr1346 to Leu1382, Leu1383 to Pro1408, Thr1409 to Glu1442, Leu1443 to Asp1473, Pro1474 to Glu1507, Thr1508 to His1541, Asp1542 to Glu1574, Leu1575 to Ile1614, Ile1615 to Asp1649, Met1650 to His1693, Pro1694 to Ala1731, Ile1732 to Trp1786, Tyr1787 to Gly1846, Asn1898 to Ile1930, Gln1931 to Gln1970, and Ala1971 to Leu2005. Residues Leu1382–Ser1982 enclose the FAT domain. 1D-myo-inositol hexakisphosphate contacts are provided by Lys1662, Lys1702, and Arg1749. The segment at Asp1812–Lys1867 is disordered. Positions Ala1820–Pro1860 are enriched in low complexity. The tract at residues Val2012–Tyr2144 is sufficient for interaction with the FKBP1A/rapamycin complex. Residue Lys2066 forms a Glycyl lysine isopeptide (Lys-Gly) (interchain with G-Cter in ubiquitin) linkage. Residues Ile2156–Lys2469 enclose the PI3K/PI4K catalytic domain. Ser2159 is subject to Phosphoserine; by TBK1. The interval Val2162–Arg2168 is G-loop. Thr2164 carries the post-translational modification Phosphothreonine. The ATP site is built by Ser2165 and Gln2167. Position 2173 is a phosphothreonine; by PKB/AKT1 (Thr2173). ATP is bound by residues Leu2185, Lys2187, Glu2190, Tyr2225, Gly2238, Trp2239, Val2240, and Thr2245. Residues Lys2258–Gly2296 form an interaction with MLST8 region. Positions Gly2335–Asn2343 are catalytic loop. Asn2343 is a Mg(2+) binding site. Residues Met2345 and Ile2356 each coordinate ATP. Residues His2355–Thr2380 form an activation loop region. Asp2357 serves as a coordination point for Mg(2+). Phosphothreonine; by RPS6KB1 is present on Thr2446. Residue Ser2448 is modified to Phosphoserine; by RPS6KB1. At Ser2478 the chain carries Phosphoserine. Ser2481 is modified (phosphoserine; by autocatalysis). In terms of domain architecture, FATC spans Asp2517 to Trp2549.

The protein belongs to the PI3/PI4-kinase family. As to quaternary structure, part of the mechanistic target of rapamycin complex 1 (mTORC1) which contains MTOR, MLST8 and RPTOR. The mTORC1 complex is a 1 Md obligate dimer of two stoichiometric heterotetramers with overall dimensions of 290 A x 210 A x 135 A. It has a rhomboid shape and a central cavity, the dimeric interfaces are formed by interlocking interactions between the two MTOR and the two RPTOR subunits. The MLST8 subunit forms distal foot-like protuberances, and contacts only one MTOR within the complex, while the small AKT1S1/PRAS40 localizes to the midsection of the central core, in close proximity to RPTOR. mTORC1 associates with AKT1S1/PRAS40, which inhibits its activity by blocking MTOR substrate-recruitment site. Component of the mechanistic target of rapamycin complex 2 (mTORC2), consisting in two heterotretramers composed of MTOR, MLST8, RICTOR and MAPKAP1/SIN1. Interacts with PLPP7 and PML. Interacts with PRR5 and RICTOR; the interaction is direct within the mTORC2 complex and interaction with RICTOR is enhanced by deubiquitination of RICTOR by USP9X. mTORC1 and mTORC2 associate with DEPTOR, which regulates their activity. Interacts with WAC; WAC positively regulates MTOR activity by promoting the assembly of the TTT complex composed of TELO2, TTI1 and TTI2 and the RUVBL complex composed of RUVBL1 and RUVBL2 into the TTT-RUVBL complex which leads to the dimerization of the mTORC1 complex and its subsequent activation. Interacts with UBQLN1. Interacts with TTI1 and TELO2. Interacts with CLIP1; phosphorylates and regulates CLIP1. Interacts with NBN. Interacts with HTR6. Interacts with BRAT1. Interacts with MEAK7 (via C-terminal domain); the interaction increases upon nutrient stimulation. Interacts with TM4SF5; the interaction is positively regulated by arginine and is negatively regulated by leucine. Interacts with GPR137B. Interacts with NCKAP1L. Interacts with TPCN1 and TPCN2; the interaction is required for TPCN1 and TPCN2 sensitivity to ATP. Interacts with ATP6V1A and with CRYAB, forming a ternary complex. Interacts with SLC38A7; this interaction mediates the recruitment of mTORC1 to the lysosome and its subsequent activation. Interacts with TSPAN8. Autophosphorylates when part of mTORC1 or mTORC2. Phosphorylation at Ser-1261, Ser-2159 and Thr-2164 promotes autophosphorylation. Phosphorylated at Ser-2448 by RPS6KB1. Phosphorylation in the kinase domain modulates the interactions of MTOR with RPTOR and AKT1S1/PRAS40 and leads to increased intrinsic mTORC1 kinase activity. Phosphorylation at Ser-2159 by TBK1 in response to growth factors and pathogen recognition receptors promotes mTORC1 activity. Phosphorylation at Ser-2159 by TBK1 in response to EGF growth factor promotes mTORC2 activity, leading to AKT1 phosphorylation and activation. Phosphorylation at Thr-2173 in the ATP-binding region by AKT1 strongly reduces kinase activity. In terms of processing, ubiquitinated at Lys-2066 by the SCF(FBXO22) complex via 'Lys-27'-linked ubiquitination prevents mTORC1 substrate recruitment. Expressed in numerous tissues, with highest levels in testis.

Its subcellular location is the lysosome membrane. The protein resides in the endoplasmic reticulum membrane. It localises to the golgi apparatus membrane. The protein localises to the cell membrane. It is found in the mitochondrion outer membrane. Its subcellular location is the cytoplasm. The protein resides in the nucleus. It localises to the PML body. The protein localises to the microsome membrane. It is found in the cytoplasmic vesicle. Its subcellular location is the phagosome. It carries out the reaction L-seryl-[protein] + ATP = O-phospho-L-seryl-[protein] + ADP + H(+). It catalyses the reaction L-threonyl-[protein] + ATP = O-phospho-L-threonyl-[protein] + ADP + H(+). The enzyme catalyses L-tyrosyl-[protein] + ATP = O-phospho-L-tyrosyl-[protein] + ADP + H(+). The mTORC1 complex is activated in response to nutrients, growth factors or amino acids: activation requires relocalization of the mTORC1 complex to lysosomes that is mediated by the Ragulator complex, SLC38A9, and the Rag GTPases RagA/RRAGA, RagB/RRAGB, RagC/RRAGC and RagD/RRAGD. Activation of mTORC1 by growth factors such as insulin involves AKT1-mediated phosphorylation of TSC1-TSC2, which leads to the activation of the RHEB GTPase a potent activator of the protein kinase activity of mTORC1. Insulin-stimulated and amino acid-dependent phosphorylation at Ser-1261 promotes autophosphorylation and the activation of mTORC1. On the other hand, low cellular energy levels can inhibit mTORC1 through activation of PRKAA1 while hypoxia inhibits mTORC1 through a REDD1-dependent mechanism which may also require PRKAA1. The kinase activity of MTOR within the mTORC1 complex is positively regulated by MLST8. The kinase activity of MTOR is inhibited by DEPTOR and AKT1S1. The non-canonical mTORC1 complex is independent of the RHEB GTPase and specifically mediates phosphorylation of MiT/TFE factors TFEB and TFE3 but not other mTORC1 substrates: it is activated by FLCN, which activates Rag GTPases RagC/RRAGC and RagD/RRAGD. MTOR is the target of the immunosuppressive and anti-cancer drug rapamycin which acts in complex with FKBP1A/FKBP12, and specifically inhibits its kinase activity. mTORC2 is also activated by growth factors, but seems to be nutrient-insensitive. mTORC2 associates and is directly activated by ribosomes. mTORC2 may also be regulated by RHEB but in an indirect manner through the PI3K signaling pathway. In terms of biological role, serine/threonine protein kinase which is a central regulator of cellular metabolism, growth and survival in response to hormones, growth factors, nutrients, energy and stress signals. MTOR directly or indirectly regulates the phosphorylation of at least 800 proteins. Functions as part of 2 structurally and functionally distinct signaling complexes mTORC1 and mTORC2 (mTOR complex 1 and 2). In response to nutrients, growth factors or amino acids, mTORC1 is recruited to the lysosome membrane and promotes protein, lipid and nucleotide synthesis by phosphorylating key regulators of mRNA translation and ribosome synthesis. This includes phosphorylation of EIF4EBP1 and release of its inhibition toward the elongation initiation factor 4E (eiF4E). Moreover, phosphorylates and activates RPS6KB1 and RPS6KB2 that promote protein synthesis by modulating the activity of their downstream targets including ribosomal protein S6, eukaryotic translation initiation factor EIF4B, and the inhibitor of translation initiation PDCD4. Stimulates the pyrimidine biosynthesis pathway, both by acute regulation through RPS6KB1-mediated phosphorylation of the biosynthetic enzyme CAD, and delayed regulation, through transcriptional enhancement of the pentose phosphate pathway which produces 5-phosphoribosyl-1-pyrophosphate (PRPP), an allosteric activator of CAD at a later step in synthesis, this function is dependent on the mTORC1 complex. Regulates ribosome synthesis by activating RNA polymerase III-dependent transcription through phosphorylation and inhibition of MAF1 an RNA polymerase III-repressor. Activates dormant ribosomes by mediating phosphorylation of SERBP1, leading to SERBP1 inactivation and reactivation of translation. In parallel to protein synthesis, also regulates lipid synthesis through SREBF1/SREBP1 and LPIN1. To maintain energy homeostasis mTORC1 may also regulate mitochondrial biogenesis through regulation of PPARGC1A. In the same time, mTORC1 inhibits catabolic pathways: negatively regulates autophagy through phosphorylation of ULK1. Under nutrient sufficiency, phosphorylates ULK1 at 'Ser-758', disrupting the interaction with AMPK and preventing activation of ULK1. Also prevents autophagy through phosphorylation of the autophagy inhibitor DAP. Also prevents autophagy by phosphorylating RUBCNL/Pacer under nutrient-rich conditions. Prevents autophagy by mediating phosphorylation of AMBRA1, thereby inhibiting AMBRA1 ability to mediate ubiquitination of ULK1 and interaction between AMBRA1 and PPP2CA. mTORC1 exerts a feedback control on upstream growth factor signaling that includes phosphorylation and activation of GRB10 a INSR-dependent signaling suppressor. Among other potential targets mTORC1 may phosphorylate CLIP1 and regulate microtubules. The mTORC1 complex is inhibited in response to starvation and amino acid depletion. The non-canonical mTORC1 complex, which acts independently of RHEB, specifically mediates phosphorylation of MiT/TFE factors MITF, TFEB and TFE3 in the presence of nutrients, promoting their cytosolic retention and inactivation. Upon starvation or lysosomal stress, inhibition of mTORC1 induces dephosphorylation and nuclear translocation of TFEB and TFE3, promoting their transcription factor activity. The mTORC1 complex regulates pyroptosis in macrophages by promoting GSDMD oligomerization. MTOR phosphorylates RPTOR which in turn inhibits mTORC1. As part of the mTORC2 complex, MTOR transduces signals from growth factors to pathways involved in proliferation, cytoskeletal organization, lipogenesis and anabolic output. In response to growth factors, mTORC2 phosphorylates and activates AGC protein kinase family members, including AKT (AKT1, AKT2 and AKT3), PKC (PRKCA, PRKCB and PRKCE) and SGK1. In contrast to mTORC1, mTORC2 is nutrient-insensitive. mTORC2 plays a critical role in AKT1 activation by mediating phosphorylation of different sites depending on the context, such as 'Thr-450', 'Ser-473', 'Ser-477' or 'Thr-479', facilitating the phosphorylation of the activation loop of AKT1 on 'Thr-308' by PDPK1/PDK1 which is a prerequisite for full activation. mTORC2 also regulates the phosphorylation of SGK1 at 'Ser-422'. mTORC2 may regulate the actin cytoskeleton, through phosphorylation of PRKCA, PXN and activation of the Rho-type guanine nucleotide exchange factors RHOA and RAC1A or RAC1B. The mTORC2 complex also phosphorylates various proteins involved in insulin signaling, such as FBXW8 and IGF2BP1. May also regulate insulin signaling by acting as a tyrosine protein kinase that catalyzes phosphorylation of IGF1R and INSR; additional evidence are however required to confirm this result in vivo. Regulates osteoclastogenesis by adjusting the expression of CEBPB isoforms. Plays an important regulatory role in the circadian clock function; regulates period length and rhythm amplitude of the suprachiasmatic nucleus (SCN) and liver clocks. The chain is Serine/threonine-protein kinase mTOR from Homo sapiens (Human).